Reading from the N-terminus, the 208-residue chain is 3-demethoxyubiquinol 3-hydroxylase (208 aa).

Fe cation is bound by residues Glu57, Glu87, His90, Glu139, Glu171, and His174.

This sequence belongs to the COQ7 family. Fe cation is required as a cofactor.

It localises to the cell membrane. The catalysed reaction is a 5-methoxy-2-methyl-3-(all-trans-polyprenyl)benzene-1,4-diol + AH2 + O2 = a 3-demethylubiquinol + A + H2O. It functions in the pathway cofactor biosynthesis; ubiquinone biosynthesis. Functionally, catalyzes the hydroxylation of 2-nonaprenyl-3-methyl-6-methoxy-1,4-benzoquinol during ubiquinone biosynthesis. This is 3-demethoxyubiquinol 3-hydroxylase from Nitrosomonas europaea (strain ATCC 19718 / CIP 103999 / KCTC 2705 / NBRC 14298).